The following is a 934-amino-acid chain: Complement component C6 (934 aa).

Residues 1–21 (MARRSVLYFILLNALINKGQA) form the signal peptide. 11 disulfide bridges follow: cysteine 22–cysteine 61, cysteine 24–cysteine 65, cysteine 35–cysteine 73, cysteine 39–cysteine 78, cysteine 82–cysteine 117, cysteine 93–cysteine 127, cysteine 96–cysteine 133, cysteine 140–cysteine 151, cysteine 146–cysteine 164, cysteine 158–cysteine 173, and cysteine 180–cysteine 218. TSP type-1 domains are found at residues 22–79 (CFCD…QRCP) and 81–134 (NCLL…KLCK). C-linked (Man) tryptophan glycosylation occurs at tryptophan 29. Tryptophan 32 carries C-linked (Man) tryptophan; partial glycosylation. Threonine 38 carries O-linked (Fuc...) threonine glycosylation. A C-linked (Man) tryptophan; partial glycan is attached at tryptophan 90. In terms of domain architecture, LDL-receptor class A spans 138-175 (ADCKNKFRCDSGRCIARKLECNGENDCGDNSDERDCGR). Ca(2+) is bound by residues leucine 156, asparagine 159, glutamate 161, aspartate 163, aspartate 169, and glutamate 170. An MACPF domain is found at 176–522 (TKAVCTRKYN…EYAAKFDPCQ (347 aa)). A beta stranded transmembrane segment spans residues 278–290 (SFSVPIFYSSKRS). N-linked (GlcNAc...) asparagine glycosylation occurs at asparagine 324. Threonine 392 carries O-linked (Fuc...) threonine glycosylation. 16 disulfides stabilise this stretch: cysteine 399-cysteine 420, cysteine 499-cysteine 623, cysteine 521-cysteine 570, cysteine 523-cysteine 539, cysteine 526-cysteine 541, cysteine 543-cysteine 552, cysteine 577-cysteine 611, cysteine 589-cysteine 601, cysteine 644-cysteine 686, cysteine 672-cysteine 699, cysteine 704-cysteine 746, cysteine 732-cysteine 761, cysteine 773-cysteine 823, cysteine 784-cysteine 801, cysteine 786-cysteine 837, and cysteine 793-cysteine 816. Residues 402-415 (IETKKRVLFAKKTK) traverse the membrane as a beta stranded segment. One can recognise an EGF-like domain in the interval 523-553 (CAPCPNNGRPTLSGTECLCVCQSGTYGENCE). The region spanning 565–612 (DGQWGCWSSWSTCDATYKRSRTRECNNPAPQRGGKRCEGEKRQEEDCT) is the TSP type-1 3 domain. Residues tryptophan 568, tryptophan 571, and tryptophan 574 are each glycosylated (C-linked (Man) tryptophan; partial). 2 CCP regions span residues 611-688 (CTFS…RCLP) and 689-765 (DGTW…EKDT). Sushi domains are found at residues 642-701 (SGCP…ECQR) and 702-763 (TECI…TCEK). The interval 642-934 (SGCPQPVPPE…EILHPGKCLA (293 aa)) is C5b-binding domain. Residues 766-840 (LTKLKGHCQL…FLHIGSCQDG (75 aa)) form a factor I module (FIM) 1 region. In terms of domain architecture, Kazal-like 1 spans 780 to 839 (SGSECICMSPEEDCSHHSEDLCVFDTDSNDYFTSPACKFLAEKCLNNQQLHFLHIGSCQD). Asparagine 855 is a glycosylation site (N-linked (GlcNAc...) asparagine). The tract at residues 858 to 934 (KKESCGYDTC…EILHPGKCLA (77 aa)) is factor I module (FIM) 2. Cystine bridges form between cysteine 862–cysteine 873, cysteine 867–cysteine 919, cysteine 880–cysteine 897, cysteine 882–cysteine 932, and cysteine 888–cysteine 912. One can recognise a Kazal-like 2 domain in the interval 876 to 934 (STSKCVCLLPPQCFKGGNQLYCVKMGSSTSEKTLNICEVGTIRCANRKMEILHPGKCLA).

This sequence belongs to the complement C6/C7/C8/C9 family. Component of the membrane attack complex (MAC), composed of complement C5b, C6, C7, C8A, C8B, C8G and multiple copies of the pore-forming subunit C9. Post-translationally, all cysteine residues are assumed to be cross-linked to one another. Individual modules containing an even number of conserved cysteine residues are supposed to have disulfide linkages only within the same module.

The protein resides in the secreted. The protein localises to the target cell membrane. Its activity is regulated as follows. Membrane attack complex (MAC) assembly is inhibited by CD59, thereby protecting self-cells from damage during complement activation. MAC assembly is also inhibited by clusterin (CLU) chaperones that inhibit polymerization of C9. In terms of biological role, component of the membrane attack complex (MAC), a multiprotein complex activated by the complement cascade, which inserts into a target cell membrane and forms a pore, leading to target cell membrane rupture and cell lysis. The MAC is initiated by proteolytic cleavage of C5 into complement C5b in response to the classical, alternative, lectin and GZMK complement pathways. The complement pathways consist in a cascade of proteins that leads to phagocytosis and breakdown of pathogens and signaling that strengthens the adaptive immune system. Together with component C5b, involved in MAC complex assembly: complement C5b and C6 associate with the outer leaflet of target cell membrane, reducing the energy for membrane bending. This Homo sapiens (Human) protein is Complement component C6.